The following is a 152-amino-acid chain: Glutaredoxin-related protein 5, mitochondrial (152 aa).

The N-terminal 31 residues, 1-31 (MSASLSRAAAALLRWGRSAGGGGLPGAGVRA), are a transit peptide targeting the mitochondrion. The Glutaredoxin domain maps to 38 to 141 (AEQLDALVKK…EELKKLGIRS (104 aa)). K55 serves as a coordination point for glutathione. At K55 the chain carries N6-succinyllysine. C63 lines the [2Fe-2S] cluster pocket. Residues 93–97 (RQGIK), I105, and 118–119 (CD) contribute to the glutathione site. The residue at position 151 (S151) is a Phosphoserine.

This sequence belongs to the glutaredoxin family. Monothiol subfamily. Homodimer. Interacts with ISCU. Interacts with BOLA1. In terms of tissue distribution, detected in bone, liver, muscle and kidney.

It is found in the mitochondrion matrix. Functionally, monothiol glutaredoxin involved in mitochondrial iron-sulfur (Fe/S) cluster transfer. Receives 2Fe/2S clusters from scaffold protein ISCU and mediates their transfer to apoproteins, to the 4Fe/FS cluster biosynthesis machinery, or export from mitochondrion. Required for normal regulation of hemoglobin synthesis by the iron-sulfur protein ACO1. The sequence is that of Glutaredoxin-related protein 5, mitochondrial (Glrx5) from Mus musculus (Mouse).